We begin with the raw amino-acid sequence, 218 residues long: Adapter protein MecA (218 aa).

The protein belongs to the MecA family. As to quaternary structure, homodimer.

Functionally, enables the recognition and targeting of unfolded and aggregated proteins to the ClpC protease or to other proteins involved in proteolysis. The sequence is that of Adapter protein MecA from Exiguobacterium sp. (strain ATCC BAA-1283 / AT1b).